The sequence spans 245 residues: Outer membrane protein assembly factor BamD (245 aa).

Positions 1–19 are cleaved as a signal peptide; it reads MTRMKYLVAAATLSLFLAG. Cysteine 20 carries the N-palmitoyl cysteine lipid modification. Cysteine 20 carries the S-diacylglycerol cysteine lipid modification.

It belongs to the BamD family. Part of the Bam complex, which is composed of the outer membrane protein BamA, and four lipoproteins BamB, BamC, BamD and BamE.

The protein resides in the cell outer membrane. In terms of biological role, part of the outer membrane protein assembly complex, which is involved in assembly and insertion of beta-barrel proteins into the outer membrane. Constitutes, with BamA, the core component of the assembly machinery. This is Outer membrane protein assembly factor BamD from Escherichia coli O157:H7.